Here is a 104-residue protein sequence, read N- to C-terminus: Increased recombination centers protein 13 (104 aa).

The helical transmembrane segment at 63–83 (LVHLFSYVFFLFLLKICVDVL) threads the bilayer.

The protein localises to the membrane. May be involved in a pathway contributing to genomic integrity. The polypeptide is Increased recombination centers protein 13 (IRC13) (Saccharomyces cerevisiae (strain ATCC 204508 / S288c) (Baker's yeast)).